The primary structure comprises 343 residues: 5-amino-6-(D-ribitylamino)uracil--L-tyrosine 4-hydroxyphenyl transferase (343 aa).

Positions 39–268 constitute a Radical SAM core domain; that stretch reads VTYVVNRNIN…AIARILLYPE (230 aa). Residues Cys-53, Cys-57, and Cys-60 each coordinate [4Fe-4S] cluster.

This sequence belongs to the radical SAM superfamily. CofH family. In terms of assembly, consists of two subunits, CofG and CofH. [4Fe-4S] cluster serves as cofactor.

It carries out the reaction 5-amino-6-(D-ribitylamino)uracil + L-tyrosine + S-adenosyl-L-methionine = 5-amino-5-(4-hydroxybenzyl)-6-(D-ribitylimino)-5,6-dihydrouracil + 2-iminoacetate + 5'-deoxyadenosine + L-methionine + H(+). It participates in cofactor biosynthesis; coenzyme F0 biosynthesis. Its function is as follows. Catalyzes the radical-mediated synthesis of 5-amino-5-(4-hydroxybenzyl)-6-(D-ribitylimino)-5,6-dihydrouracil from 5-amino-6-(D-ribitylamino)uracil and L-tyrosine. In Archaeoglobus fulgidus (strain ATCC 49558 / DSM 4304 / JCM 9628 / NBRC 100126 / VC-16), this protein is 5-amino-6-(D-ribitylamino)uracil--L-tyrosine 4-hydroxyphenyl transferase.